Here is a 312-residue protein sequence, read N- to C-terminus: Small ribosomal subunit protein uS2 (312 aa).

The protein belongs to the universal ribosomal protein uS2 family. As to quaternary structure, component of the small ribosomal subunit. Mature ribosomes consist of a small (40S) and a large (60S) subunit. The 40S subunit contains about 33 different proteins and 1 molecule of RNA (18S). The 60S subunit contains about 49 different proteins and 3 molecules of RNA (25S, 5.8S and 5S). Interacts with ribosomal protein S21.

It localises to the cytoplasm. In terms of biological role, required for the assembly and/or stability of the 40S ribosomal subunit. Required for the processing of the 20S rRNA-precursor to mature 18S rRNA in a late step of the maturation of 40S ribosomal subunits. In Vitis vinifera (Grape), this protein is Small ribosomal subunit protein uS2.